The chain runs to 344 residues: tRNA N6-adenosine threonylcarbamoyltransferase (344 aa).

The Fe cation site is built by His112 and His116. Substrate is bound by residues 134 to 138, Asp167, Gly180, and Asn280; that span reads LASGG. Position 308 (Asp308) interacts with Fe cation.

It belongs to the KAE1 / TsaD family. It depends on Fe(2+) as a cofactor.

It is found in the cytoplasm. The enzyme catalyses L-threonylcarbamoyladenylate + adenosine(37) in tRNA = N(6)-L-threonylcarbamoyladenosine(37) in tRNA + AMP + H(+). Required for the formation of a threonylcarbamoyl group on adenosine at position 37 (t(6)A37) in tRNAs that read codons beginning with adenine. Is involved in the transfer of the threonylcarbamoyl moiety of threonylcarbamoyl-AMP (TC-AMP) to the N6 group of A37, together with TsaE and TsaB. TsaD likely plays a direct catalytic role in this reaction. This is tRNA N6-adenosine threonylcarbamoyltransferase from Rickettsia conorii (strain ATCC VR-613 / Malish 7).